We begin with the raw amino-acid sequence, 242 residues long: Sec-independent protein translocase protein TatCd (242 aa).

Helical transmembrane passes span isoleucine 19–aspartate 39, isoleucine 60–alanine 80, and leucine 107–leucine 127. An interaction with TatAd region spans residues serine 128–arginine 149. The helical transmembrane segment at phenylalanine 150–phenylalanine 170 threads the bilayer. Residues leucine 171 to lysine 187 form an interaction with TatAd region. Helical transmembrane passes span leucine 188–aspartate 208 and phenylalanine 209–valine 229.

Belongs to the TatC family. In terms of assembly, forms a complex with TatAd. Two types of complexes exist: one composed of TatAd and TatCd, and another composed only of TatAd.

It is found in the cell membrane. Part of the twin-arginine translocation (Tat) system that transports large folded proteins containing a characteristic twin-arginine motif in their signal peptide across membranes. Required for PhoD secretion. TatCd promotes membrane localization of TatAd via domain specific interactions. TatCd is required for stabile production of TatAd as well as for its maintenance. The polypeptide is Sec-independent protein translocase protein TatCd (Bacillus subtilis (strain 168)).